Consider the following 754-residue polypeptide: Phosphoribosylformylglycinamidine synthase subunit PurL (754 aa).

Residue histidine 52 is part of the active site. The ATP site is built by tyrosine 55 and lysine 95. A Mg(2+)-binding site is contributed by glutamate 97. Residues serine 98–histidine 101 and arginine 120 contribute to the substrate site. Catalysis depends on histidine 99, which acts as the Proton acceptor. Aspartate 121 serves as a coordination point for Mg(2+). Glutamine 244 contributes to the substrate binding site. Aspartate 272 provides a ligand contact to Mg(2+). Glutamate 316 to glutamine 318 is a substrate binding site. 2 residues coordinate ATP: asparagine 504 and glycine 541. Asparagine 542 contributes to the Mg(2+) binding site. Serine 544 contacts substrate.

This sequence belongs to the FGAMS family. In terms of assembly, monomer. Part of the FGAM synthase complex composed of 1 PurL, 1 PurQ and 2 PurS subunits.

It localises to the cytoplasm. The enzyme catalyses N(2)-formyl-N(1)-(5-phospho-beta-D-ribosyl)glycinamide + L-glutamine + ATP + H2O = 2-formamido-N(1)-(5-O-phospho-beta-D-ribosyl)acetamidine + L-glutamate + ADP + phosphate + H(+). The protein operates within purine metabolism; IMP biosynthesis via de novo pathway; 5-amino-1-(5-phospho-D-ribosyl)imidazole from N(2)-formyl-N(1)-(5-phospho-D-ribosyl)glycinamide: step 1/2. Its function is as follows. Part of the phosphoribosylformylglycinamidine synthase complex involved in the purines biosynthetic pathway. Catalyzes the ATP-dependent conversion of formylglycinamide ribonucleotide (FGAR) and glutamine to yield formylglycinamidine ribonucleotide (FGAM) and glutamate. The FGAM synthase complex is composed of three subunits. PurQ produces an ammonia molecule by converting glutamine to glutamate. PurL transfers the ammonia molecule to FGAR to form FGAM in an ATP-dependent manner. PurS interacts with PurQ and PurL and is thought to assist in the transfer of the ammonia molecule from PurQ to PurL. This is Phosphoribosylformylglycinamidine synthase subunit PurL from Salinibacter ruber (strain DSM 13855 / M31).